We begin with the raw amino-acid sequence, 71 residues long: Small, acid-soluble spore protein 2 (71 aa).

Belongs to the alpha/beta-type SASP family.

Functionally, SASP are bound to spore DNA. They are double-stranded DNA-binding proteins that cause DNA to change to an a-like conformation. They protect the DNA backbone from chemical and enzymatic cleavage and are thus involved in dormant spore's high resistance to UV light. The polypeptide is Small, acid-soluble spore protein 2 (Bacillus subtilis).